A 331-amino-acid chain; its full sequence is Phosphoribosylformylglycinamidine cyclo-ligase (331 aa).

The protein belongs to the AIR synthase family.

Its subcellular location is the cytoplasm. It carries out the reaction 2-formamido-N(1)-(5-O-phospho-beta-D-ribosyl)acetamidine + ATP = 5-amino-1-(5-phospho-beta-D-ribosyl)imidazole + ADP + phosphate + H(+). The protein operates within purine metabolism; IMP biosynthesis via de novo pathway; 5-amino-1-(5-phospho-D-ribosyl)imidazole from N(2)-formyl-N(1)-(5-phospho-D-ribosyl)glycinamide: step 2/2. The protein is Phosphoribosylformylglycinamidine cyclo-ligase of Clostridium kluyveri (strain NBRC 12016).